The primary structure comprises 181 residues: Large ribosomal subunit protein uL5 (181 aa).

It belongs to the universal ribosomal protein uL5 family. As to quaternary structure, part of the 50S ribosomal subunit; part of the 5S rRNA/L5/L18/L25 subcomplex. Contacts the 5S rRNA and the P site tRNA. Forms a bridge to the 30S subunit in the 70S ribosome.

Functionally, this is one of the proteins that bind and probably mediate the attachment of the 5S RNA into the large ribosomal subunit, where it forms part of the central protuberance. In the 70S ribosome it contacts protein S13 of the 30S subunit (bridge B1b), connecting the 2 subunits; this bridge is implicated in subunit movement. Contacts the P site tRNA; the 5S rRNA and some of its associated proteins might help stabilize positioning of ribosome-bound tRNAs. This Baumannia cicadellinicola subsp. Homalodisca coagulata protein is Large ribosomal subunit protein uL5.